The following is a 459-amino-acid chain: Glutathione reductase (459 aa).

S14, G15, E34, T41, C42, K50, and A114 together coordinate FAD. S14 provides a ligand contact to glutathione. Residues C42 and C47 are joined by a disulfide bond. NADP(+) contacts are provided by I177, E180, R197, K203, and G262. Residues D313 and T321 each coordinate FAD. R329 lines the glutathione pocket. Position 351 (A351) interacts with NADP(+). H448 contacts FAD. The active-site Proton acceptor is the H448.

Belongs to the class-I pyridine nucleotide-disulfide oxidoreductase family. As to quaternary structure, homodimer. The cofactor is FAD.

It is found in the cytoplasm. It carries out the reaction 2 glutathione + NADP(+) = glutathione disulfide + NADPH + H(+). Its function is as follows. Catalyzes the reduction of glutathione disulfide (GSSG) to reduced glutathione (GSH). Constitutes the major mechanism to maintain a high GSH:GSSG ratio in the cytosol. The chain is Glutathione reductase (gor) from Nostoc sp. (strain PCC 7120 / SAG 25.82 / UTEX 2576).